The following is a 228-amino-acid chain: Early nodulin-like protein 18 (228 aa).

A signal peptide spans 1–26; it reads MSPSCSSCVNVLLIMCLMLLSLSADA. The Phytocyanin domain occupies 28–148; sequence KNYTVGESTG…GQHFMINVTH (121 aa). 4 N-linked (GlcNAc...) asparagine glycosylation sites follow: N29, N71, N94, and N145. Cysteines 86 and 136 form a disulfide. A disordered region spans residues 148 to 211; the sequence is HGQGLPDSSS…VHSKKSSSST (64 aa). A compositionally biased stretch (low complexity) spans 153-170; sequence PDSSSPDDAAAPGPSESS. Basic and acidic residues predominate over residues 188–204; that stretch reads DHPKDIESADDDKEVHS. Residue S204 is the site of GPI-anchor amidated serine attachment. Positions 205–228 are cleaved as a propeptide — removed in mature form; the sequence is KKSSSSTTKTSLFCFVFMGLFASF.

The protein belongs to the early nodulin-like (ENODL) family. Mostly expressed in seedlings, roots and flowers, and, to a lower extent, in leaves, stems and seeds.

The protein localises to the cell membrane. In terms of biological role, may act as a carbohydrate transporter. This Arabidopsis thaliana (Mouse-ear cress) protein is Early nodulin-like protein 18.